Reading from the N-terminus, the 127-residue chain is PanD regulatory factor (127 aa).

The region spanning 1–127 is the N-acetyltransferase domain; sequence MKLTIIRLEK…TAQQGGWEKC (127 aa). Interaction with PanD regions lie at residues 43 to 48 and 66 to 76; these read RFNERL and LRVREVTRRRG. CoA-binding positions include 66-68 and 72-79; these read LRV and TRRRGVGQ.

It belongs to the PanZ/PanM family. As to quaternary structure, interacts with PanD in the presence of CoA. Forms a heterooctameric complex composed of four PanD subunits and four PanZ subunits. Monomer in solution.

Activation of PanD processing occurs even at low CoA concentrations. In contrast, full inhibition of PanD catalytic activity only occurs at sufficiently high CoA concentrations. Controls both the activation and catalytic activity of PanD in a coenzyme A (CoA)-dependent fashion. Binding of CoA or a derivative to PanZ leads to interaction with PanD, which promotes the processing and activation of pro-PanD, and subsequent substrate-mediated inhibition of the active form of PanD. Inhibition of PanD activity is probably the primary metabolic role of PanZ, allowing negative feedback regulation of pantothenate biosynthesis by CoA. The protein is PanD regulatory factor of Escherichia coli (strain K12).